A 688-amino-acid polypeptide reads, in one-letter code: PR domain zinc finger protein 8 (688 aa).

An SET domain is found at 16 to 131 (KAVQQCLTDI…KDEELLVWYG (116 aa)). Residue Tyr-130 coordinates S-adenosyl-L-methionine. The C2H2-type 1 zinc finger occupies 154-182 (YTCLECSQRFQFEFPYVAHLRFRCPKRLH). 2 disordered regions span residues 184–309 (TDAN…GCKG) and 397–506 (EEAA…PARS). Residues 192 to 208 (QGGGLGTKDHGGGGGGK) are compositionally biased toward gly residues. Low complexity-rich tracts occupy residues 209 to 219 (EQQQQQQQQQQ) and 275 to 284 (GSSSCVAAPG). 2 stretches are compositionally biased toward gly residues: residues 414–424 (AGGGVAGGGSN) and 470–489 (LGGGGGAGTAGTAGGSGGGQ). 2 C2H2-type zinc fingers span residues 624 to 647 (NWCAKCNASFRMTSDLVYHMRSHH) and 665 to 687 (LKCPICNESFRERHHLSRHMTSH).

The protein belongs to the class V-like SAM-binding methyltransferase superfamily. As to quaternary structure, interacts with BHLHE22. Interacts with EPM2A and NHLRC1. This interaction sequesters EPM2A and NHLRC1 to the nucleus. As to expression, expressed in brain, heart, liver, testes, retina. Highest expression is observed in the retina and hippocampus; moderately expressed in the cortex and cerebellum. In the retina, it is expressed in bipolar and amacrine cells.

Its subcellular location is the nucleus. In terms of biological role, probable histone methyltransferase, preferentially acting on 'Lys-9' of histone H3. Histone methyltransferase activity has not been confirmed in other species. Involved in the control of steroidogenesis through transcriptional repression of steroidogenesis marker genes such as CYP17A1 and LHCGR. Forms with BHLHE22 a transcriptional repressor complex controlling genes involved in neural development and neuronal differentiation. In the retina, it is required for rod bipolar and type 2 OFF-cone bipolar cell survival. The protein is PR domain zinc finger protein 8 (Prdm8) of Mus musculus (Mouse).